A 664-amino-acid chain; its full sequence is DNA ligase (664 aa).

Residues 30–34 (DFEFD), 79–80 (SL), and Glu109 contribute to the NAD(+) site. Lys111 serves as the catalytic N6-AMP-lysine intermediate. The NAD(+) site is built by Arg132, Glu169, Lys284, and Lys308. Residues Cys403, Cys406, Cys421, and Cys427 each contribute to the Zn(2+) site. Positions 586-664 (NRSEKLKGLT…NEDAFLNMLE (79 aa)) constitute a BRCT domain.

The protein belongs to the NAD-dependent DNA ligase family. LigA subfamily. The cofactor is Mg(2+). It depends on Mn(2+) as a cofactor.

It catalyses the reaction NAD(+) + (deoxyribonucleotide)n-3'-hydroxyl + 5'-phospho-(deoxyribonucleotide)m = (deoxyribonucleotide)n+m + AMP + beta-nicotinamide D-nucleotide.. Functionally, DNA ligase that catalyzes the formation of phosphodiester linkages between 5'-phosphoryl and 3'-hydroxyl groups in double-stranded DNA using NAD as a coenzyme and as the energy source for the reaction. It is essential for DNA replication and repair of damaged DNA. This is DNA ligase from Parabacteroides distasonis (strain ATCC 8503 / DSM 20701 / CIP 104284 / JCM 5825 / NCTC 11152).